The chain runs to 74 residues: Anionic peptide clone 8 (74 aa).

The first 24 residues, 1–24, serve as a signal peptide directing secretion; the sequence is MVSKSLIVLLLVSVLVSTFFTTEA.

It belongs to the non-disulfide-bridged peptide (NDBP) superfamily. Long chain multifunctional peptide (group 2) family. As to expression, expressed by the venom gland.

Its subcellular location is the secreted. Its function is as follows. May be an antimicrobial peptide. This is Anionic peptide clone 8 from Tityus costatus (Brazilian scorpion).